The sequence spans 383 residues: Putative protein FAM157A (383 aa).

Disordered regions lie at residues 1–21 (MGPL…PLPK) and 177–254 (ATAR…PLGR).

It belongs to the FAM157 family.

This Homo sapiens (Human) protein is Putative protein FAM157A (FAM157A).